A 214-amino-acid polypeptide reads, in one-letter code: A-type ATP synthase subunit D (214 aa).

Belongs to the V-ATPase D subunit family. Has multiple subunits with at least A(3), B(3), C, D, E, F, H, I and proteolipid K(x).

Its subcellular location is the cell membrane. Its function is as follows. Component of the A-type ATP synthase that produces ATP from ADP in the presence of a proton gradient across the membrane. This chain is A-type ATP synthase subunit D, found in Thermococcus gammatolerans (strain DSM 15229 / JCM 11827 / EJ3).